Consider the following 1558-residue polypeptide: MIKNGTCPFWERDDLSECARREYIEFKFPLFILLTGMIYAFCKVFRAFYLRRKNHTNEAPEFEEQGNGNHEYARFSVLRLKSAWESRSFCNVNNRSTFDKFKKFIEGAFIVLQLTIHLYILSNMPMDNKKFFHQGFLVQMFLWILLLVVITLRLISASQSFRWVLACKRDLWAVSFYSYASLFTLSILPLRSVFIGKIKDKIMVKYIISETFIDLALLLLLSTSSIEGTRYSFLVENENKKLPPAPTVFGLLTFSRIDRLIWKAYKHCLGNADIWDLDINNKSIAILANFEMSSKKGRLLPNIICYFKAVFISQLFLAFVSSFLNFVPSLLMPRILSYVNDPKSQSWNLVSLYVSSMLVSKIIATTCRGQGLFLGEKGTMQLRTVLISNIYSKTLRRTILKDSTTSLQKNASTSFEENPDSSEAEPRKKSSRKDNSVNNVMSIDAFKVSEAMNTFYLACEAVFMTVTALMILYSLLGWSAFAGTFALLAMIPLNFWCATFYGNYQADQLILTDKRTSGISEALNSIRVIKLLAWENLFYQKIINVRDGEIRLLKKKATIFFLNHLIWFFGPTLVSAITFSVFIKFQNQTLTPTIAFTALSLFAILRTPMDQIASTVSLLIQSFISLERIQDYLNEPETRKYEILEQSNTKFGFEDASMEWEAAETSFKLKNISIDFKLNSLNAIIGPTGSGKSSLLLGLLGELNLLSGKIYVPTVESRDDLEIGKDGMTNSMAYCSQTPWLISGTIKDNVVFGEIFNKQKFDDVMKSCCLDKDIKAMTAGIRTDVGDGGFSLSGGQQQRIALARAIYSSSRYLILDDCLSAVDPETALYIYEECLCGPMMKGRTCIITSHNISLVTKRADWLVILDRGEVKSQGKPSDLIKSNEFLRESINNDSKNTTHNQIDLKRSTTSKKTKNGDPEGENSQDEVCAEVENFEETKMEGSVKFSAYKWLADYFGGLGVVFVFTSSAILIHGITLSQGFWLRYWLETGSSGSKSTWLYRIVEGHSNIYFILTYIVIGFVSSFLTSGKVWIAIISGTNVTKKIFAKLLSSILYAKLRFHNVTPTGRIMNRFSKDMDIIDQQLIPNFEGLSYSVVVCLWIILLIGYVTPQFLLFAIPLCALYYTVCTLYLRASRELKRIDNINISPIHQLFAEAIKGVTTIRALADERRFITQSLVAIDRSNAPFFYLNMATEWITYRVDIIGTLVLFSSSVMIIMKASYLDAGLAGILLSNAFSFTETAQWIIKVFSSVELLMSSVERIKEYTDIPSESNGYISPPANWPQTGDVELKNLSLRYSPHSSKALDNVSFKVKAGTKVGIVGRTGAGKSSIIAAIYRLSDWENGTIIIDNKDIKHIPLERLRNSISCIPQDPTLFDGTVRSNLDPFDRYSDVQIYGVLSKVGLIEECDELSLISEQEQPNFSSHKLRNRFIDLNTVVKSGGSNLSQGQRQLLCLARSMLGARNIMLIDEATASIDYISDAKIQKTIRETMKNTTILTIAHRLRSVIDYDKILVMEMGRVKEYDHPYTLISDRNTIFYRLCRQSGEFENLFELAKVSFDNKR.

The Extracellular portion of the chain corresponds to 1–29 (MIKNGTCPFWERDDLSECARREYIEFKFP). Asn4 carries N-linked (GlcNAc...) asparagine glycosylation. A helical transmembrane segment spans residues 30 to 50 (LFILLTGMIYAFCKVFRAFYL). Topologically, residues 51–103 (RRKNHTNEAPEFEEQGNGNHEYARFSVLRLKSAWESRSFCNVNNRSTFDKFKK) are cytoplasmic. A helical membrane pass occupies residues 104–124 (FIEGAFIVLQLTIHLYILSNM). At 125–130 (PMDNKK) the chain is on the extracellular side. A helical transmembrane segment spans residues 131–151 (FFHQGFLVQMFLWILLLVVIT). The Cytoplasmic portion of the chain corresponds to 152-169 (LRLISASQSFRWVLACKR). A helical membrane pass occupies residues 170-190 (DLWAVSFYSYASLFTLSILPL). At 191–201 (RSVFIGKIKDK) the chain is on the extracellular side. Residues 202–222 (IMVKYIISETFIDLALLLLLS) traverse the membrane as a helical segment. Over 223–302 (TSSIEGTRYS…SSKKGRLLPN (80 aa)) the chain is Cytoplasmic. Residues 303 to 323 (IICYFKAVFISQLFLAFVSSF) form a helical membrane-spanning segment. The 311-residue stretch at 311–621 (FISQLFLAFV…IASTVSLLIQ (311 aa)) folds into the ABC transmembrane type-1 1 domain. The Extracellular portion of the chain corresponds to 324–351 (LNFVPSLLMPRILSYVNDPKSQSWNLVS). A helical membrane pass occupies residues 352 to 374 (LYVSSMLVSKIIATTCRGQGLFL). Residues 375–449 (GEKGTMQLRT…VMSIDAFKVS (75 aa)) are Cytoplasmic-facing. Residues 410-434 (NASTSFEENPDSSEAEPRKKSSRKD) are disordered. Residues 424 to 434 (AEPRKKSSRKD) are compositionally biased toward basic and acidic residues. A helical transmembrane segment spans residues 450-470 (EAMNTFYLACEAVFMTVTALM). Residues 471-481 (ILYSLLGWSAF) lie on the Extracellular side of the membrane. The helical transmembrane segment at 482 to 504 (AGTFALLAMIPLNFWCATFYGNY) threads the bilayer. The Cytoplasmic segment spans residues 505-558 (QADQLILTDKRTSGISEALNSIRVIKLLAWENLFYQKIINVRDGEIRLLKKKAT). The chain crosses the membrane as a helical span at residues 559–579 (IFFLNHLIWFFGPTLVSAITF). The Extracellular segment spans residues 580–584 (SVFIK). The helical transmembrane segment at 585-605 (FQNQTLTPTIAFTALSLFAIL) threads the bilayer. Residues 606 to 953 (RTPMDQIAST…KFSAYKWLAD (348 aa)) are Cytoplasmic-facing. Residues 651-892 (FGFEDASMEW…NEFLRESINN (242 aa)) enclose the ABC transporter 1 domain. 686–693 (GPTGSGKS) lines the ATP pocket. A compositionally biased stretch (polar residues) spans 892 to 901 (NDSKNTTHNQ). Residues 892-926 (NDSKNTTHNQIDLKRSTTSKKTKNGDPEGENSQDE) are disordered. Residues 954–974 (YFGGLGVVFVFTSSAILIHGI) form a helical membrane-spanning segment. The region spanning 961–1251 (VFVFTSSAIL…IIKVFSSVEL (291 aa)) is the ABC transmembrane type-1 2 domain. Residues 975 to 1013 (TLSQGFWLRYWLETGSSGSKSTWLYRIVEGHSNIYFILT) are Extracellular-facing. The helical transmembrane segment at 1014-1034 (YIVIGFVSSFLTSGKVWIAII) threads the bilayer. Residues 1035–1082 (SGTNVTKKIFAKLLSSILYAKLRFHNVTPTGRIMNRFSKDMDIIDQQL) lie on the Cytoplasmic side of the membrane. Residues 1083 to 1105 (IPNFEGLSYSVVVCLWIILLIGY) traverse the membrane as a helical segment. The Extracellular portion of the chain corresponds to 1106 to 1109 (VTPQ). A helical transmembrane segment spans residues 1110–1132 (FLLFAIPLCALYYTVCTLYLRAS). The Cytoplasmic portion of the chain corresponds to 1133-1199 (RELKRIDNIN…ATEWITYRVD (67 aa)). Residues 1200-1220 (IIGTLVLFSSSVMIIMKASYL) form a helical membrane-spanning segment. Topologically, residues 1221–1222 (DA) are extracellular. A helical transmembrane segment spans residues 1223 to 1243 (GLAGILLSNAFSFTETAQWII). At 1244-1558 (KVFSSVELLM…LAKVSFDNKR (315 aa)) the chain is on the cytoplasmic side. The 254-residue stretch at 1285 to 1538 (VELKNLSLRY…RNTIFYRLCR (254 aa)) folds into the ABC transporter 2 domain. Position 1319 to 1326 (1319 to 1326 (GRTGAGKS)) interacts with ATP.

It belongs to the ABC transporter superfamily. ABCC family. Conjugate transporter (TC 3.A.1.208) subfamily.

The protein localises to the membrane. In Saccharomyces cerevisiae (strain YJM789) (Baker's yeast), this protein is ABC transporter NFT1 (NFT1).